The following is a 237-amino-acid chain: Myelin protein zero-like protein 3 (237 aa).

Positions 1–32 (MQLARGTVGGRGCALFPLLSILVVQGARIVLS) are cleaved as a signal peptide. The region spanning 33 to 149 (LEISADAHVR…NIPLTELTVT (117 aa)) is the Ig-like V-type domain. The Extracellular segment spans residues 33 to 159 (LEISADAHVR…ERGFGTMLSS (127 aa)). C53 and C129 are oxidised to a cystine. N124 carries an N-linked (GlcNAc...) asparagine glycan. The helical transmembrane segment at 160–180 (VALLSILVFVPSAVVVILLLV) threads the bilayer. Residues 181–237 (RMGRKATGVQKRSRSGYKKSSIEVSDDTDQEDSNDCMTRLCVRCAECLDSDYEEEAY) lie on the Cytoplasmic side of the membrane.

The protein belongs to the myelin P0 protein family. Present in all tissues tested, including the skin. Present in the keratinocytes and sebocytes in the skin (at protein level).

It is found in the membrane. Its function is as follows. Mediates homophilic cell-cell adhesion. The protein is Myelin protein zero-like protein 3 (Mpzl3) of Mus musculus (Mouse).